The chain runs to 1257 residues: RAF-like serine/threonine-protein kinase 24 (1257 aa).

The segment at Met-1–Gly-21 is disordered. Residues Pro-191–Ser-277 enclose the PB1 domain. Composition is skewed to basic and acidic residues over residues Val-457–Asp-480 and Lys-493–Ser-502. 2 disordered regions span residues Val-457–Gln-629 and Ser-761–Gly-789. Phosphoserine is present on Ser-474. Low complexity predominate over residues Thr-533 to Ser-548. The span at Lys-550–Thr-576 shows a compositional bias: basic and acidic residues. Residue Ser-555 is modified to Phosphoserine. Over residues Ser-583 to Val-593 the composition is skewed to low complexity. The segment covering Glu-769 to Ser-782 has biased composition (polar residues). Ser-777 is modified (phosphoserine). Positions Leu-974–Met-1239 constitute a Protein kinase domain. ATP is bound by residues Leu-980–Val-988 and Lys-1001. Ser-1013 bears the Phosphoserine mark. Asp-1102 (proton acceptor) is an active-site residue.

This sequence belongs to the protein kinase superfamily. Ser/Thr protein kinase family. Post-translationally, hyperphosphorylated in response to auxin in an ABP1- and TMK1-dependent manner.

It is found in the cytoplasm. It catalyses the reaction L-seryl-[protein] + ATP = O-phospho-L-seryl-[protein] + ADP + H(+). The enzyme catalyses L-threonyl-[protein] + ATP = O-phospho-L-threonyl-[protein] + ADP + H(+). Activated by auxin via rapid phosphorylation downstream of ABP1 and TMK1 signaling. RAF-like protein kinase acting, together with RAF20, as a central mediator of a fast response pathway to auxin involving proteins phosphorylation, and leading to rapid cellular responses including membrane depolarization and cytoplasmic streaming. Required for general growth and developmental process. The polypeptide is RAF-like serine/threonine-protein kinase 24 (Arabidopsis thaliana (Mouse-ear cress)).